The sequence spans 113 residues: Large ribosomal subunit protein bL17 (113 aa).

Belongs to the bacterial ribosomal protein bL17 family. Part of the 50S ribosomal subunit. Contacts protein L32.

The chain is Large ribosomal subunit protein bL17 from Clostridium beijerinckii (strain ATCC 51743 / NCIMB 8052) (Clostridium acetobutylicum).